Here is a 918-residue protein sequence, read N- to C-terminus: Protein translocase subunit SecA (918 aa).

ATP is bound by residues glutamine 87, 105-109, and aspartate 516; that span reads GEGKT. Zn(2+)-binding residues include cysteine 902, cysteine 904, cysteine 913, and histidine 914.

It belongs to the SecA family. In terms of assembly, monomer and homodimer. Part of the essential Sec protein translocation apparatus which comprises SecA, SecYEG and auxiliary proteins SecDF-YajC and YidC. Zn(2+) is required as a cofactor.

It is found in the cell inner membrane. Its subcellular location is the cytoplasm. The enzyme catalyses ATP + H2O + cellular proteinSide 1 = ADP + phosphate + cellular proteinSide 2.. Functionally, part of the Sec protein translocase complex. Interacts with the SecYEG preprotein conducting channel. Has a central role in coupling the hydrolysis of ATP to the transfer of proteins into and across the cell membrane, serving both as a receptor for the preprotein-SecB complex and as an ATP-driven molecular motor driving the stepwise translocation of polypeptide chains across the membrane. This is Protein translocase subunit SecA from Methylibium petroleiphilum (strain ATCC BAA-1232 / LMG 22953 / PM1).